Here is a 368-residue protein sequence, read N- to C-terminus: Glutaminyl-peptide cyclotransferase (368 aa).

An N-terminal signal peptide occupies residues 1–23 (MARERRDSKAATFFCLAWALCLA). 2 N-linked (GlcNAc...) asparagine glycosylation sites follow: Asn53 and Asn65. A disulfide bond links Cys143 and Cys169. Asp164 contacts Zn(2+). Glu207 serves as the catalytic Proton acceptor. Glu208 lines the Zn(2+) pocket. Asp254 functions as the Proton acceptor in the catalytic mechanism. A glycan (N-linked (GlcNAc...) asparagine) is linked at Asn292. Residue His336 participates in Zn(2+) binding. A glycan (N-linked (GlcNAc...) asparagine) is linked at Asn352.

It belongs to the glutaminyl-peptide cyclotransferase family. As to expression, expressed by the venom gland.

It is found in the secreted. The enzyme catalyses N-terminal L-glutaminyl-[peptide] = N-terminal 5-oxo-L-prolyl-[peptide] + NH4(+). Functionally, responsible for the biosynthesis of pyroglutamyl peptides. Has a bias against acidic and tryptophan residues adjacent to the N-terminal glutaminyl residue and a lack of importance of chain length after the second residue. Also catalyzes N-terminal pyroglutamate formation. The sequence is that of Glutaminyl-peptide cyclotransferase (QPCT) from Bothrops jararaca (Jararaca).